The chain runs to 249 residues: 2,3-bisphosphoglycerate-dependent phosphoglycerate mutase (249 aa).

Substrate contacts are provided by residues arginine 11–asparagine 18, threonine 24–glycine 25, arginine 63, glutamate 90–tyrosine 93, lysine 101, arginine 117–arginine 118, and glycine 184–asparagine 185. Histidine 12 serves as the catalytic Tele-phosphohistidine intermediate. Residue glutamate 90 is the Proton donor/acceptor of the active site.

The protein belongs to the phosphoglycerate mutase family. BPG-dependent PGAM subfamily.

It catalyses the reaction (2R)-2-phosphoglycerate = (2R)-3-phosphoglycerate. It functions in the pathway carbohydrate degradation; glycolysis; pyruvate from D-glyceraldehyde 3-phosphate: step 3/5. Its function is as follows. Catalyzes the interconversion of 2-phosphoglycerate and 3-phosphoglycerate. In Mycobacterium bovis (strain BCG / Pasteur 1173P2), this protein is 2,3-bisphosphoglycerate-dependent phosphoglycerate mutase.